The primary structure comprises 215 residues: Serine acetyltransferase (215 aa).

Belongs to the transferase hexapeptide repeat family.

Its subcellular location is the cytoplasm. The enzyme catalyses L-serine + acetyl-CoA = O-acetyl-L-serine + CoA. The protein operates within amino-acid biosynthesis; L-cysteine biosynthesis; L-cysteine from L-serine: step 1/2. This is Serine acetyltransferase (cysE) from Staphylococcus aureus (strain MRSA252).